The following is a 171-amino-acid chain: Lipoprotein signal peptidase (171 aa).

3 helical membrane-spanning segments follow: residues 12 to 32 (WYWVAVLVFFADQLSKQWVLA), 67 to 87 (WQRWLFTIVAVGFSTLLTVWL), and 93 to 113 (SLLKLNLAYTLVIGGALGNLV). Residues aspartate 123 and aspartate 141 contribute to the active site. A helical transmembrane segment spans residues 137–157 (FNIADSAICIGAVLIIWDAFL).

The protein belongs to the peptidase A8 family.

It localises to the cell inner membrane. The enzyme catalyses Release of signal peptides from bacterial membrane prolipoproteins. Hydrolyzes -Xaa-Yaa-Zaa-|-(S,diacylglyceryl)Cys-, in which Xaa is hydrophobic (preferably Leu), and Yaa (Ala or Ser) and Zaa (Gly or Ala) have small, neutral side chains.. Its pathway is protein modification; lipoprotein biosynthesis (signal peptide cleavage). Its function is as follows. This protein specifically catalyzes the removal of signal peptides from prolipoproteins. The sequence is that of Lipoprotein signal peptidase from Shewanella baltica (strain OS223).